A 492-amino-acid chain; its full sequence is Phosphatidylglycerol--prolipoprotein diacylglyceryl transferase (492 aa).

Transmembrane regions (helical) follow at residues 40–60 (IFGIGWALLFLLIAVLAYVGW), 72–92 (AIRQIAGFAVMAAVILVVVVP), 106–126 (VAVRGYGMFLMLAAIASVGLA), 133–153 (AGLGADSILQLAPWTFIGGLL), 184–204 (QGGLVVYGGFIGGFIASLIAL), 214–234 (IGDVIIPCVFVGLLFGRLGCL), 361–381 (VWGTQIISSVFAAIMFVVLLI), 409–429 (GVLMLVGFIAYGVLRIVLEWI), and 441–461 (LSISQWVSLVVIAASLVTLFI). An a 1,2-diacyl-sn-glycero-3-phospho-(1'-sn-glycerol)-binding site is contributed by R230.

This sequence belongs to the Lgt family.

The protein resides in the cell inner membrane. It catalyses the reaction L-cysteinyl-[prolipoprotein] + a 1,2-diacyl-sn-glycero-3-phospho-(1'-sn-glycerol) = an S-1,2-diacyl-sn-glyceryl-L-cysteinyl-[prolipoprotein] + sn-glycerol 1-phosphate + H(+). Its pathway is protein modification; lipoprotein biosynthesis (diacylglyceryl transfer). Catalyzes the transfer of the diacylglyceryl group from phosphatidylglycerol to the sulfhydryl group of the N-terminal cysteine of a prolipoprotein, the first step in the formation of mature lipoproteins. The sequence is that of Phosphatidylglycerol--prolipoprotein diacylglyceryl transferase from Rhodopirellula baltica (strain DSM 10527 / NCIMB 13988 / SH1).